The primary structure comprises 333 residues: Dihydroorotate dehydrogenase (quinone) (333 aa).

FMN is bound by residues 56–60 and Thr-80; that span reads AGLDK. Lys-60 serves as a coordination point for substrate. 105–109 is a substrate binding site; that stretch reads NRMGF. FMN contacts are provided by Asn-133 and Asn-166. A substrate-binding site is contributed by Asn-166. Ser-169 functions as the Nucleophile in the catalytic mechanism. Residue Asn-171 participates in substrate binding. 2 residues coordinate FMN: Lys-211 and Thr-239. 240-241 contacts substrate; that stretch reads NT. FMN contacts are provided by residues Gly-262, Gly-291, and 312 to 313; that span reads YS.

Belongs to the dihydroorotate dehydrogenase family. Type 2 subfamily. Monomer. The cofactor is FMN.

The protein localises to the cell membrane. It carries out the reaction (S)-dihydroorotate + a quinone = orotate + a quinol. It participates in pyrimidine metabolism; UMP biosynthesis via de novo pathway; orotate from (S)-dihydroorotate (quinone route): step 1/1. Functionally, catalyzes the conversion of dihydroorotate to orotate with quinone as electron acceptor. The polypeptide is Dihydroorotate dehydrogenase (quinone) (Legionella pneumophila (strain Lens)).